A 310-amino-acid polypeptide reads, in one-letter code: ADP-L-glycero-D-manno-heptose-6-epimerase (310 aa).

NADP(+) is bound by residues 10-11, 31-32, K38, K53, 75-79, and N92; these read LI, DN, and EGACS. Residue Y140 is the Proton acceptor of the active site. K144 is an NADP(+) binding site. Position 169 (N169) interacts with substrate. 2 residues coordinate NADP(+): V170 and K178. K178 acts as the Proton acceptor in catalysis. Residues S180, H187, 201–204, R209, and Y272 contribute to the substrate site; that span reads FAGS.

It belongs to the NAD(P)-dependent epimerase/dehydratase family. HldD subfamily. In terms of assembly, homopentamer. The cofactor is NADP(+).

The catalysed reaction is ADP-D-glycero-beta-D-manno-heptose = ADP-L-glycero-beta-D-manno-heptose. Its pathway is nucleotide-sugar biosynthesis; ADP-L-glycero-beta-D-manno-heptose biosynthesis; ADP-L-glycero-beta-D-manno-heptose from D-glycero-beta-D-manno-heptose 7-phosphate: step 4/4. Its function is as follows. Catalyzes the interconversion between ADP-D-glycero-beta-D-manno-heptose and ADP-L-glycero-beta-D-manno-heptose via an epimerization at carbon 6 of the heptose. This is ADP-L-glycero-D-manno-heptose-6-epimerase from Erwinia tasmaniensis (strain DSM 17950 / CFBP 7177 / CIP 109463 / NCPPB 4357 / Et1/99).